Consider the following 343-residue polypeptide: Methionine import ATP-binding protein MetN 1 (343 aa).

Residues 2-241 (IKLSNITKVF…PKTPLAQKFI (240 aa)) enclose the ABC transporter domain. 38 to 45 (GASGAGKS) lines the ATP pocket.

This sequence belongs to the ABC transporter superfamily. Methionine importer (TC 3.A.1.24) family. In terms of assembly, the complex is composed of two ATP-binding proteins (MetN), two transmembrane proteins (MetI) and a solute-binding protein (MetQ).

Its subcellular location is the cell inner membrane. The catalysed reaction is L-methionine(out) + ATP + H2O = L-methionine(in) + ADP + phosphate + H(+). It catalyses the reaction D-methionine(out) + ATP + H2O = D-methionine(in) + ADP + phosphate + H(+). Its function is as follows. Part of the ABC transporter complex MetNIQ involved in methionine import. Responsible for energy coupling to the transport system. The sequence is that of Methionine import ATP-binding protein MetN 1 from Salmonella choleraesuis (strain SC-B67).